A 386-amino-acid polypeptide reads, in one-letter code: Flap endonuclease 1 (386 aa).

The interval 1–104 (MGILGLSKLI…GELAKRAERR (104 aa)) is N-domain. A Mg(2+)-binding site is contributed by Asp34. Residues Arg47 and Arg70 each coordinate DNA. The Mg(2+) site is built by Asp86, Glu158, Glu160, Asp179, and Asp181. The interval 122-253 (EIEKFNRRLV…KRAIELINNY (132 aa)) is I-domain. Residue Glu158 coordinates DNA. Residues Gly231 and Asp233 each coordinate DNA. Asp233 is a binding site for Mg(2+). The interaction with PCNA stretch occupies residues 336–344 (TQVRLDSFF). Positions 351-386 (PNAVHAAKRKAEEAKKSANNKKAKTSGGAARGRRPK) are disordered.

This sequence belongs to the XPG/RAD2 endonuclease family. FEN1 subfamily. Interacts with PCNA. Three molecules of FEN1 bind to one PCNA trimer with each molecule binding to one PCNA monomer. PCNA stimulates the nuclease activity without altering cleavage specificity. Mg(2+) is required as a cofactor. Post-translationally, phosphorylated. Phosphorylation upon DNA damage induces relocalization to the nuclear plasma.

It localises to the nucleus. It is found in the nucleolus. The protein localises to the nucleoplasm. The protein resides in the mitochondrion. In terms of biological role, structure-specific nuclease with 5'-flap endonuclease and 5'-3' exonuclease activities involved in DNA replication and repair. During DNA replication, cleaves the 5'-overhanging flap structure that is generated by displacement synthesis when DNA polymerase encounters the 5'-end of a downstream Okazaki fragment. It enters the flap from the 5'-end and then tracks to cleave the flap base, leaving a nick for ligation. Also involved in the long patch base excision repair (LP-BER) pathway, by cleaving within the apurinic/apyrimidinic (AP) site-terminated flap. Acts as a genome stabilization factor that prevents flaps from equilibrating into structures that lead to duplications and deletions. Also possesses 5'-3' exonuclease activity on nicked or gapped double-stranded DNA, and exhibits RNase H activity. Also involved in replication and repair of rDNA and in repairing mitochondrial DNA. This Drosophila persimilis (Fruit fly) protein is Flap endonuclease 1.